Here is a 188-residue protein sequence, read N- to C-terminus: E3 ubiquitin-protein ligase RNF183 (188 aa).

The Cytoplasmic segment spans residues 1–157 (MAEQQGREPE…RECFRNPHFR (157 aa)). The RING-type zinc-finger motif lies at 11 to 58 (CPVCWNPFNNTFHTPKVLDCCHSFCVECLAHISLVTPTRRRLLCPLCR). Residues 158 to 178 (IFAYMMAVILCGTVLFIFSIF) form a helical; Anchor for type IV membrane protein membrane-spanning segment. Over 179-188 (CTRRFFWGVG) the chain is Lumenal.

In terms of assembly, interacts with FATE1. Interacts with SEC16A. Interacts with BCL2L1. In terms of processing, autoubiquitinated (in vitro).

It localises to the endoplasmic reticulum membrane. The protein localises to the endoplasmic reticulum. It is found in the golgi apparatus. Its subcellular location is the cis-Golgi network membrane. The protein resides in the lysosome. It carries out the reaction S-ubiquitinyl-[E2 ubiquitin-conjugating enzyme]-L-cysteine + [acceptor protein]-L-lysine = [E2 ubiquitin-conjugating enzyme]-L-cysteine + N(6)-ubiquitinyl-[acceptor protein]-L-lysine.. It participates in protein modification; protein ubiquitination. In terms of biological role, acts as an E3 ubiquitin ligase catalyzing the covalent attachment of ubiquitin moieties onto substrate proteins. Triggers apoptosis in response to prolonged ER stress by mediating the polyubiquitination and subsequent proteasomal degradation of BCL2L1. May collaborate with FATE1 to restrain BIK protein levels thus regulating apoptotic signaling. This is E3 ubiquitin-protein ligase RNF183 (RNF183) from Bos taurus (Bovine).